The primary structure comprises 460 residues: Cell death abnormality protein 8 (460 aa).

At 1–45 the chain is on the cytoplasmic side; sequence MYLKKHESKLLLIPKNEDKEDAGIIAVLTDRVPSVLIVRWFDLFC. The helical transmembrane segment at 46–66 threads the bilayer; it reads FGFAMCSYVLDFFSDIGIAIF. Residues 67 to 77 lie on the Extracellular side of the membrane; the sequence is HFWAGRHLSGA. A helical transmembrane segment spans residues 78–98; that stretch reads LVLTFALIPSVIINIISMVWM. Topologically, residues 99–123 are cytoplasmic; that stretch reads LDDEMHWKRRAHPRRTGTFELNQKR. Residues 124–144 form a helical membrane-spanning segment; the sequence is FISLGKMITLCIFQMGPLFWY. The Extracellular portion of the chain corresponds to 145–219; it reads YKALYYGWMF…YYISGKYPYW (75 aa). A helical membrane pass occupies residues 220-240; that stretch reads LYFQAASLTLSIISISWSVVV. Residues 241-274 lie on the Cytoplasmic side of the membrane; sequence QNRSLRMTRDDKVNIWPHEAVLQFCWRFLTILAR. Residues 275–295 form a helical membrane-spanning segment; that stretch reads IITLVAFVLLFGIYVVFLIFG. The Extracellular segment spans residues 296–320; it reads HLIVTLVHVIFLQALHIEACTHIEK. A helical membrane pass occupies residues 321-341; that stretch reads LLLLINAMIHLFTPFNMAEGN. Over 342-353 the chain is Cytoplasmic; sequence TRYRYLVAYTVE. A helical transmembrane segment spans residues 354 to 374; the sequence is FIEMMIIFLLLPTPLDAFPLI. Topologically, residues 375–378 are extracellular; that stretch reads EKIR. A helical membrane pass occupies residues 379-399; that stretch reads IGVPATFFIGIFIMLIYYKFF. Over 400 to 460 the chain is Cytoplasmic; that stretch reads HPNRRQDLEA…SLLEEDECHN (61 aa).

The protein belongs to the XK family. Post-translationally, cleavage by ced-3 activates ced-8 function in promoting phosphatidylserine exposure at the surface of apoptotic cells.

It localises to the cell membrane. In terms of biological role, acts downstream of ced-9 and caspase ced-3 to promote phosphatidylserine exposure on apoptotic cell surface, possibly by mediating phospholipid scrambling. Phosphatidylserine is a specific marker only present at the surface of apoptotic cells and acts as a specific signal for engulfment. Regulates apoptosis kinetics during embryonic development. Not required for engulfment of germ cell corpses. This chain is Cell death abnormality protein 8, found in Caenorhabditis briggsae.